The following is a 338-amino-acid chain: Phosphonates-binding periplasmic protein (338 aa).

A signal peptide spans 1–26 (MNAKIIASLAFTSMFSLSTLLSPAHA).

Belongs to the phosphate/phosphite/phosphonate binding protein family. As to quaternary structure, the complex is composed of two ATP-binding proteins (PhnC), two transmembrane proteins (PhnE) and a solute-binding protein (PhnD).

The protein localises to the periplasm. Its function is as follows. Phosphonate binding protein that is part of the phosphonate uptake system. Exhibits high affinity for 2-aminoethylphosphonate, and somewhat less affinity to ethylphosphonate, methylphosphonate, phosphonoacetate and phenylphosphonate. In Escherichia coli (strain K12), this protein is Phosphonates-binding periplasmic protein (phnD).